A 538-amino-acid polypeptide reads, in one-letter code: Sterile alpha motif domain-containing protein 1 (538 aa).

The segment covering 1–11 (MAGPPALPPPE) has biased composition (pro residues). 2 disordered regions span residues 1 to 30 (MAGP…ASPH) and 92 to 247 (SYRN…GAAR). Low complexity predominate over residues 12 to 29 (TAAAATTAAAASSSAASP). In terms of domain architecture, SAMD1-like winged helix (WH) spans 23 to 99 (SSSAASPHYQ…SISYRNAARV (77 aa)). Threonine 107 carries the phosphothreonine modification. Over residues 115-125 (PRGAPAAAAAA) the composition is skewed to low complexity. Pro residues predominate over residues 126 to 139 (APPPTPAPPPPPAP). Residues 140–158 (VAAAAPARAPRAAAAAATA) are compositionally biased toward low complexity. The residue at position 161 (serine 161) is a Phosphoserine. Positions 168–177 (GPRAQRAAPL) are enriched in low complexity. Positions 178-236 (AAPPPAPAAPPAVAPPAGPRRAPPPAVAAREPPLPPPPQPPAPPQQQQPPPPQPQPPPE) are enriched in pro residues. Positions 237 to 247 (GGAVRAGGAAR) are enriched in low complexity. Serine 261 bears the Phosphoserine mark. The segment covering 282 to 291 (AARGRLERTR) has biased composition (basic and acidic residues). The disordered stretch occupies residues 282–458 (AARGRLERTR…PPGRKEKPSD (177 aa)). A compositionally biased stretch (acidic residues) spans 328-351 (KEEEEDDDEDEDEEDDVSEGSEVP). Positions 425–436 (SPSPVPLPPGKP) are enriched in pro residues. The SAM domain occupies 462 to 530 (WTVMDVVEYF…KVLQQGHFED (69 aa)).

Homopolymerize into a closed pentameric ring. Interacts (via SAM domain) with L3MBTL3 (via SAM domain); the interaction mediates L3MBTL3 binding to chromatin. Interacts (via WH domain) with KDM1A; the interaction modulates KDM1A function. As to expression, expressed in atherosclerotic lesions, not in normal intima. Expressed in foam cells.

It localises to the nucleus. The protein resides in the chromosome. It is found in the secreted. Its function is as follows. Unmethylated CpG islands (CGIs)-binding protein which localizes to H3K4me3-decorated CGIs, where it acts as a transcriptional repressor. Tethers L3MBTL3 to chromatin and interacts with the KDM1A histone demethylase complex to modulate H3K4me2 and H3K4me3 levels at CGIs. Plays a role in atherogenesis by binding with LDL on cell surface and promoting LDL oxidation which leads to the formation of foam cell. The sequence is that of Sterile alpha motif domain-containing protein 1 from Homo sapiens (Human).